The following is a 99-amino-acid chain: Keratinocyte differentiation-associated protein (99 aa).

Positions 1–22 (MKIPVLPAVVLLSLLALHSAQG) are cleaved as a signal peptide.

As to expression, highly expressed in skin, but not detectable in any other tissue examined. Expression restricted to cornified/stratified epithelia and not detected in non-cornified/stratified epithelia.

It is found in the secreted. Its function is as follows. May act as a soluble regulator of keratinocyte differentiation. May play an important role in embryonic skin morphogenesis. The protein is Keratinocyte differentiation-associated protein of Canis lupus familiaris (Dog).